A 381-amino-acid chain; its full sequence is L-lactate dehydrogenase (381 aa).

Residues 1–380 (MIISASTDYR…SADSLVRELG (380 aa)) enclose the FMN hydroxy acid dehydrogenase domain. Y24 provides a ligand contact to substrate. S106 and Q127 together coordinate FMN. Position 129 (Y129) interacts with substrate. An FMN-binding site is contributed by T155. Residue R164 coordinates substrate. K251 lines the FMN pocket. The Proton acceptor role is filled by H275. R278 contacts substrate. 306–330 (DSGIRTGLDVVRMIALGADSVLLGR) serves as a coordination point for FMN.

The protein belongs to the FMN-dependent alpha-hydroxy acid dehydrogenase family. In terms of assembly, homotetramer. Requires FMN as cofactor.

The protein localises to the cell inner membrane. The catalysed reaction is (S)-lactate + A = pyruvate + AH2. Its function is as follows. Catalyzes the conversion of L-lactate to pyruvate. Is coupled to the respiratory chain. The chain is L-lactate dehydrogenase from Pseudomonas paraeruginosa (strain DSM 24068 / PA7) (Pseudomonas aeruginosa (strain PA7)).